The sequence spans 446 residues: N-succinylarginine dihydrolase (446 aa).

Substrate contacts are provided by residues 19 to 28 (AGLSFGNVAS), N110, and 137 to 138 (HR). E174 is an active-site residue. R213 provides a ligand contact to substrate. H249 is an active-site residue. Residues D251 and N364 each coordinate substrate. C370 serves as the catalytic Nucleophile.

This sequence belongs to the succinylarginine dihydrolase family. Homodimer.

The enzyme catalyses N(2)-succinyl-L-arginine + 2 H2O + 2 H(+) = N(2)-succinyl-L-ornithine + 2 NH4(+) + CO2. The protein operates within amino-acid degradation; L-arginine degradation via AST pathway; L-glutamate and succinate from L-arginine: step 2/5. Its function is as follows. Catalyzes the hydrolysis of N(2)-succinylarginine into N(2)-succinylornithine, ammonia and CO(2). The chain is N-succinylarginine dihydrolase from Burkholderia mallei (strain NCTC 10247).